The sequence spans 162 residues: NADH-quinone oxidoreductase subunit I (162 aa).

4Fe-4S ferredoxin-type domains are found at residues 53–83 (LRRYPNGEERCIACKLCEAICPALAITIEAE) and 93–122 (TRYDIDLTKCIFCGFCEEACPVDAVVETRI). Residues C63, C66, C69, C73, C102, C105, C108, and C112 each contribute to the [4Fe-4S] cluster site.

This sequence belongs to the complex I 23 kDa subunit family. NDH-1 is composed of 14 different subunits. Subunits NuoA, H, J, K, L, M, N constitute the membrane sector of the complex. It depends on [4Fe-4S] cluster as a cofactor.

It localises to the cell inner membrane. It catalyses the reaction a quinone + NADH + 5 H(+)(in) = a quinol + NAD(+) + 4 H(+)(out). Its function is as follows. NDH-1 shuttles electrons from NADH, via FMN and iron-sulfur (Fe-S) centers, to quinones in the respiratory chain. The immediate electron acceptor for the enzyme in this species is believed to be ubiquinone. Couples the redox reaction to proton translocation (for every two electrons transferred, four hydrogen ions are translocated across the cytoplasmic membrane), and thus conserves the redox energy in a proton gradient. The polypeptide is NADH-quinone oxidoreductase subunit I (Dechloromonas aromatica (strain RCB)).